The chain runs to 78 residues: MAKAAVRKPKKKVCVFCKDKVHYIDYKDTSLLRKFISDRGKIRARRVTGNCSQHQRDVATAVKNSREMALLPYTSTAR.

It belongs to the bacterial ribosomal protein bS18 family. In terms of assembly, part of the 30S ribosomal subunit. Forms a tight heterodimer with protein bS6.

Its function is as follows. Binds as a heterodimer with protein bS6 to the central domain of the 16S rRNA, where it helps stabilize the platform of the 30S subunit. In Parafrankia sp. (strain EAN1pec), this protein is Small ribosomal subunit protein bS18.